The chain runs to 137 residues: Large ribosomal subunit protein uL16 (137 aa).

It belongs to the universal ribosomal protein uL16 family. In terms of assembly, part of the 50S ribosomal subunit.

Its function is as follows. Binds 23S rRNA and is also seen to make contacts with the A and possibly P site tRNAs. In Beijerinckia indica subsp. indica (strain ATCC 9039 / DSM 1715 / NCIMB 8712), this protein is Large ribosomal subunit protein uL16.